Here is a 349-residue protein sequence, read N- to C-terminus: Heat-inducible transcription repressor HrcA (349 aa).

Belongs to the HrcA family.

In terms of biological role, negative regulator of class I heat shock genes (grpE-dnaK-dnaJ and groELS operons). Prevents heat-shock induction of these operons. In Lactobacillus acidophilus (strain ATCC 700396 / NCK56 / N2 / NCFM), this protein is Heat-inducible transcription repressor HrcA.